Here is a 155-residue protein sequence, read N- to C-terminus: Ribosomal RNA large subunit methyltransferase H (155 aa).

Residues L73, G104, and 123-128 contribute to the S-adenosyl-L-methionine site; that span reads LSPLTL.

This sequence belongs to the RNA methyltransferase RlmH family. Homodimer.

The protein resides in the cytoplasm. The enzyme catalyses pseudouridine(1915) in 23S rRNA + S-adenosyl-L-methionine = N(3)-methylpseudouridine(1915) in 23S rRNA + S-adenosyl-L-homocysteine + H(+). Its function is as follows. Specifically methylates the pseudouridine at position 1915 (m3Psi1915) in 23S rRNA. This is Ribosomal RNA large subunit methyltransferase H from Pseudomonas aeruginosa (strain UCBPP-PA14).